Consider the following 737-residue polypeptide: Alpha-adducin (737 aa).

Methionine 1 is subject to N-acetylmethionine. Residues 1 to 21 (MNGDSRAAVVTSPPPTTAPHK) are disordered. The residue at position 12 (serine 12) is a Phosphoserine. Residue serine 59 is modified to Phosphoserine; by PKA. Serine 64 carries the phosphoserine modification. Threonine 331 is modified (phosphothreonine). Serine 334, serine 353, serine 355, serine 358, and serine 366 each carry phosphoserine. A Phosphoserine; by PKA modification is found at serine 408. Disordered stretches follow at residues 421-486 (FASD…SAVP) and 576-737 (RREV…KSDS). Serine 427 is modified (phosphoserine). Threonine 429 carries the phosphothreonine modification. The residue at position 431 (serine 431) is a Phosphoserine. Serine 436 carries the phosphoserine; by PKA modification. Threonine 445 is modified (phosphothreonine; by ROCK2). Phosphoserine is present on residues serine 464 and serine 465. Threonine 480 carries the phosphothreonine; by ROCK2 modification. At serine 481 the chain carries Phosphoserine; by PKA. The span at 576–601 (RREVERKQKGSEENLDEAREQKEKSP) shows a compositional bias: basic and acidic residues. A phosphoserine mark is found at serine 586, serine 600, and serine 613. Residues 602–614 (PDQPAVPHPPPST) show a composition bias toward pro residues. A Phosphothreonine modification is found at threonine 614. Phosphoserine occurs at positions 678, 707, 710, and 714. Low complexity predominate over residues 687 to 714 (PVAEEAAPSAVEEGAAADPGSDGSPGKS). Residues 715–737 (PSKKKKKFRTPSFLKKSKKKSDS) are compositionally biased toward basic residues. At serine 716 the chain carries Phosphoserine; by PKC. Residues 717 to 734 (KKKKKFRTPSFLKKSKKK) are interaction with calmodulin. A Phosphoserine; by PKA and PKC modification is found at serine 726.

The protein belongs to the aldolase class II family. Adducin subfamily. Heterodimer of an alpha and a beta subunit or an alpha and a gamma subunit. In terms of tissue distribution, expressed in all tissues. Found in much higher levels in reticulocytes than the beta subunit.

The protein resides in the cytoplasm. It localises to the cytoskeleton. Its subcellular location is the cell membrane. In terms of biological role, membrane-cytoskeleton-associated protein that promotes the assembly of the spectrin-actin network. Binds to calmodulin. This chain is Alpha-adducin (ADD1), found in Homo sapiens (Human).